A 197-amino-acid chain; its full sequence is Nascent polypeptide-associated complex subunit alpha (197 aa).

Positions 1-20 are enriched in acidic residues; that stretch reads MAEPVEDSVDEISSEGDSDV. 2 disordered regions span residues 1 to 46 and 120 to 154; these read MAEP…RKLL and GADR…SKAD. The NAC-A/B domain occupies 36 to 101; it reads DKNERKSRKL…AKVEDMSQNS (66 aa). Residues 134–154 show a composition bias toward basic and acidic residues; it reads SGHDHAHDHDHSHGDCASKAD. The region spanning 158–195 is the UBA domain; the sequence is VNQSDIDLVVSQVGCTREQAVEALIKNKGDIVETIMQL.

It belongs to the NAC-alpha family.

Its function is as follows. May promote appropriate targeting of ribosome-nascent polypeptide complexes. This Babesia divergens protein is Nascent polypeptide-associated complex subunit alpha.